The following is a 561-amino-acid chain: Urocanate hydratase (561 aa).

Residues 52 to 53 (GG), Gln130, 176 to 178 (GMG), Glu196, Arg201, 242 to 243 (NA), 263 to 267 (QTSAH), 273 to 274 (YL), and Tyr322 contribute to the NAD(+) site. Residue Cys410 is part of the active site. Residue Gly492 coordinates NAD(+).

This sequence belongs to the urocanase family. Requires NAD(+) as cofactor.

The protein resides in the cytoplasm. It carries out the reaction 4-imidazolone-5-propanoate = trans-urocanate + H2O. Its pathway is amino-acid degradation; L-histidine degradation into L-glutamate; N-formimidoyl-L-glutamate from L-histidine: step 2/3. Catalyzes the conversion of urocanate to 4-imidazolone-5-propionate. This Enterobacter sp. (strain 638) protein is Urocanate hydratase.